The sequence spans 305 residues: MGTTGARPSRRAVLTAAAGAAVAGIPLGGSTAFAAPRGNPDVLRQLRALEQEHSARLGVYARDTATGRTVLHRAEERFPMCSVFKTLAVAAVLRDLDRDGEFLATRLFYTEQEVKDSGFGPVTGLPENLAAGMTVERLCAAAICQSDNAAANLLLRELGGPEAVTRFCRSVGDRTTRLDRWEPELNSAEPGRLTDTTTPRAIGATYGELVLGDALAPRDRERLTGWLLANTTSTERFRKGLPADWTLGDKTGGGAYGTNNDAGVTWPPHRPPVVMVVLTTHDRPDAVADNPLVAKTAALLASALG.

Residues 1–34 constitute a signal peptide (tat-type signal); the sequence is MGTTGARPSRRAVLTAAAGAAVAGIPLGGSTAFA. The active-site Acyl-ester intermediate is Ser82. 250–252 serves as a coordination point for substrate; it reads KTG.

Belongs to the class-A beta-lactamase family. Post-translationally, predicted to be exported by the Tat system. The position of the signal peptide cleavage has not been experimentally proven.

The catalysed reaction is a beta-lactam + H2O = a substituted beta-amino acid. In Streptomyces lavendulae, this protein is Beta-lactamase.